Here is a 198-residue protein sequence, read N- to C-terminus: Peptidyl-tRNA hydrolase (198 aa).

A tRNA-binding site is contributed by Y15. H20 serves as the catalytic Proton acceptor. Positions 66, 68, and 114 each coordinate tRNA.

The protein belongs to the PTH family. As to quaternary structure, monomer.

The protein localises to the cytoplasm. It catalyses the reaction an N-acyl-L-alpha-aminoacyl-tRNA + H2O = an N-acyl-L-amino acid + a tRNA + H(+). In terms of biological role, hydrolyzes ribosome-free peptidyl-tRNAs (with 1 or more amino acids incorporated), which drop off the ribosome during protein synthesis, or as a result of ribosome stalling. Catalyzes the release of premature peptidyl moieties from peptidyl-tRNA molecules trapped in stalled 50S ribosomal subunits, and thus maintains levels of free tRNAs and 50S ribosomes. The sequence is that of Peptidyl-tRNA hydrolase from Cupriavidus necator (strain ATCC 17699 / DSM 428 / KCTC 22496 / NCIMB 10442 / H16 / Stanier 337) (Ralstonia eutropha).